Consider the following 125-residue polypeptide: 14 kDa phosphohistidine phosphatase (125 aa).

Alanine 2 carries the N-acetylalanine modification. Lysine 21 serves as a coordination point for substrate. Histidine 53 acts as the Proton acceptor in catalysis. 94–96 (SMG) lines the substrate pocket.

Monomer.

It localises to the cytoplasm. The enzyme catalyses N(pros)-phospho-L-histidyl-[protein] + H2O = L-histidyl-[protein] + phosphate. It carries out the reaction N(tele)-phospho-L-histidyl-[protein] + H2O = L-histidyl-[protein] + phosphate. Exhibits phosphohistidine phosphatase activity. Its function is as follows. May have a significant involvement in neuronal signaling. The polypeptide is 14 kDa phosphohistidine phosphatase (PHPT1) (Oryctolagus cuniculus (Rabbit)).